Reading from the N-terminus, the 381-residue chain is MNENFHSFHEKELRDGQVESVSAGSSPPCDKDSSALLAFRGISISELKNHSVLQALTAEANAWEPRVVSTEVLQAQEEWEAVESIHPETGSRASMDQPGQLISFSEALQHFQTVDLSSFKKRIQPTIRRTGLAALRHYLFGPPKLHQGLREERDLVLTIAQCGLDSQDPMHGRVLQTIYKKLTGSKFDCALHGDHWEDLGFQGTNPATDLRGAGFLALLHLLYLVMDSKTLLMAREILRLSRHHIQQFPFCLMSVNITRIAIQALREECLSRECNRQQKVIPVVNSFYAATFLRLAHIWRTQHKTISDSGFVLKDLEMSAKKSPRRLLKTLETYLAGVSKGQASLLGTQKCSGPQAPHSKDLTFTGVCDLPSHLSEGTWLI.

Residues Met1–Gln17 show a composition bias toward basic and acidic residues. The tract at residues Met1–Lys31 is disordered. An ELMO domain is found at Met170–Pro324.

It localises to the cell projection. The protein localises to the stereocilium. Its subcellular location is the kinocilium. The protein resides in the cytoplasm. It is found in the cytoskeleton. Its function is as follows. Acts as a GTPase-activating protein (GAP) for ARL2 with low specific activity. The chain is ELMO domain-containing protein 3 (ELMOD3) from Bos taurus (Bovine).